The chain runs to 137 residues: Large ribosomal subunit protein uL16 (137 aa).

The protein belongs to the universal ribosomal protein uL16 family. Part of the 50S ribosomal subunit.

In terms of biological role, binds 23S rRNA and is also seen to make contacts with the A and possibly P site tRNAs. The protein is Large ribosomal subunit protein uL16 of Psychrobacter cryohalolentis (strain ATCC BAA-1226 / DSM 17306 / VKM B-2378 / K5).